A 336-amino-acid chain; its full sequence is Galactose/methyl galactoside import permease protein MglC (336 aa).

The Periplasmic segment spans residues Met1–Gly16. The helical transmembrane segment at Gly17–Leu37 threads the bilayer. Over Ser38 to Arg52 the chain is Cytoplasmic. The chain crosses the membrane as a helical span at residues Ile53–Gly73. At Arg74 to Ala106 the chain is on the periplasmic side. The next 2 helical transmembrane spans lie at Leu107–Ile127 and Ala128–Ile148. Over Asn149–Ser180 the chain is Periplasmic. A helical membrane pass occupies residues Phe181–Trp201. Topologically, residues Asn202–Asn226 are cytoplasmic. A helical transmembrane segment spans residues Val227–Met247. Residues Leu248–Ala256 are Periplasmic-facing. Residues Thr257–Val277 form a helical membrane-spanning segment. Position 278 (Ser278) is a topological domain, cytoplasmic. A helical transmembrane segment spans residues Phe279 to Ile299. The Periplasmic portion of the chain corresponds to Asn300–Tyr305. The helical transmembrane segment at Ile306–Ala326 threads the bilayer. Over Leu327–Lys336 the chain is Cytoplasmic.

This sequence belongs to the binding-protein-dependent transport system permease family. AraH/RbsC subfamily. The complex is composed of one ATP-binding protein (MglA), two transmembrane proteins (MglC) and a solute-binding protein (MglB).

It is found in the cell inner membrane. In terms of biological role, part of the ABC transporter complex MglABC involved in galactose/methyl galactoside import. Probably responsible for the translocation of the substrate across the membrane. In Escherichia coli (strain K12), this protein is Galactose/methyl galactoside import permease protein MglC (mglC).